The chain runs to 123 residues: MPPKKDTKGDSKKGQKAKAGSGGGKAKKKKWSKGKVRDKLNNLVLFDKATYDKLYKEVPSYKLITPSVVSERLKIRGSLARAALKELHSKGMIKLVSKHSAQVIYTRATKDTDSKIVLRRGHQ.

The span at 1–13 shows a compositional bias: basic and acidic residues; that stretch reads MPPKKDTKGDSKK. The tract at residues 1 to 34 is disordered; the sequence is MPPKKDTKGDSKKGQKAKAGSGGGKAKKKKWSKG. Positions 25 to 34 are enriched in basic residues; sequence KAKKKKWSKG.

This sequence belongs to the eukaryotic ribosomal protein eS25 family.

The polypeptide is Small ribosomal subunit protein eS25 (RPS25) (Branchiostoma belcheri (Amphioxus)).